We begin with the raw amino-acid sequence, 266 residues long: Ribosomal RNA small subunit methyltransferase A (266 aa).

Residues N12, L14, G39, E61, D87, and N107 each contribute to the S-adenosyl-L-methionine site.

The protein belongs to the class I-like SAM-binding methyltransferase superfamily. rRNA adenine N(6)-methyltransferase family. RsmA subfamily.

Its subcellular location is the cytoplasm. It carries out the reaction adenosine(1518)/adenosine(1519) in 16S rRNA + 4 S-adenosyl-L-methionine = N(6)-dimethyladenosine(1518)/N(6)-dimethyladenosine(1519) in 16S rRNA + 4 S-adenosyl-L-homocysteine + 4 H(+). In terms of biological role, specifically dimethylates two adjacent adenosines (A1518 and A1519) in the loop of a conserved hairpin near the 3'-end of 16S rRNA in the 30S particle. May play a critical role in biogenesis of 30S subunits. This Nitratidesulfovibrio vulgaris (strain DP4) (Desulfovibrio vulgaris) protein is Ribosomal RNA small subunit methyltransferase A.